We begin with the raw amino-acid sequence, 410 residues long: MPGVCDRAPDFLSPSEDQVLRPALGSSVALNCTAWVVSGPHCSLPSVQWLKDGLPLGIGGHYSLHEYSWVKANLSEVLVSSVLGVNVTSTEVYGAFTCSIQNISFSSFTLQRAGPTSHVAAVLASLLVLLALLLAALLYVKCRLNVLLWYQDAYGEVEINDGKLYDAYVSYSDCPEDRKFVNFILKPQLERRRGYKLFLDDRDLLPRAEPSADLLVNLSRCRRLIVVLSDAFLSRAWCSHSFREGLCRLLELTRRPIFITFEGQRRDPAHPALRLLRQHRHLVTLLLWRPGSVTPSSDFWKEVQLALPRKVQYRPVEGDPQTQLQDDKDPMLILRGRVPEGRALDSEVDPDPEGDLGVRGPVFGEPSAPPHTSGVSLGESRSSEVDVSDLGSRNYSARTDFYCLVSKDDM.

The Extracellular portion of the chain corresponds to 1–118; that stretch reads MPGVCDRAPD…TLQRAGPTSH (118 aa). The 101-residue stretch at 9–109 folds into the Ig-like C2-type domain; the sequence is PDFLSPSEDQ…IQNISFSSFT (101 aa). N-linked (GlcNAc...) asparagine glycans are attached at residues Asn31, Asn73, Asn86, and Asn102. Cys32 and Cys98 form a disulfide bridge. The chain crosses the membrane as a helical; Signal-anchor for type III membrane protein span at residues 119-139; that stretch reads VAAVLASLLVLLALLLAALLY. Over 140 to 410 the chain is Cytoplasmic; it reads VKCRLNVLLW…FYCLVSKDDM (271 aa). Residues 163 to 307 enclose the TIR domain; that stretch reads KLYDAYVSYS…DFWKEVQLAL (145 aa). A disordered region spans residues 340–390; it reads EGRALDSEVDPDPEGDLGVRGPVFGEPSAPPHTSGVSLGESRSSEVDVSDL. Ser383 bears the Phosphoserine mark.

This sequence belongs to the interleukin-1 receptor family. As to quaternary structure, interacts with IL1R1, IRAK1, TLR4, TLR5, TLR9 and TRAF6. Upon IL-1 stimulation found in a complex at least composed of IL1R1, SIGIRR, MYD88, IRAK1 and TRAF6. Upon stimulation with LPC found in a complex at least composed of TLR4, SIG1IR, MYD88, IRAK1 and TRAF6. Interacts with PALM3. As to expression, mainly expressed in epithelial tissues such as kidney, lung and gut.

The protein resides in the membrane. Acts as a negative regulator of the Toll-like and IL-1R receptor signaling pathways. Attenuates the recruitment of receptor-proximal signaling components to the TLR4 receptor, probably through an TIR-TIR domain interaction with TLR4. Through its extracellular domain interferes with the heterodimerization of Il1R1 and IL1RAP. This is Single Ig IL-1-related receptor (SIGIRR) from Homo sapiens (Human).